The primary structure comprises 56 residues: Large ribosomal subunit protein bL33 (56 aa).

The protein belongs to the bacterial ribosomal protein bL33 family.

This chain is Large ribosomal subunit protein bL33 (rpmG), found in Treponema pallidum (strain Nichols).